The chain runs to 145 residues: Copper transporter 6 (145 aa).

2 helical membrane-spanning segments follow: residues 47 to 67 (LGMYVLCLIVVFLLAVIVEWL) and 99 to 119 (YLVMLAVMSFNGGVFIVAIAG).

It belongs to the copper transporter (Ctr) (TC 1.A.56) family. SLC31A subfamily.

It localises to the membrane. In terms of biological role, involved in the transport of copper. This Arabidopsis thaliana (Mouse-ear cress) protein is Copper transporter 6 (COPT6).